Here is a 369-residue protein sequence, read N- to C-terminus: 4-hydroxy-3-methylbut-2-en-1-yl diphosphate synthase (flavodoxin) (369 aa).

Positions 270, 273, 305, and 312 each coordinate [4Fe-4S] cluster.

This sequence belongs to the IspG family. Requires [4Fe-4S] cluster as cofactor.

It carries out the reaction (2E)-4-hydroxy-3-methylbut-2-enyl diphosphate + oxidized [flavodoxin] + H2O + 2 H(+) = 2-C-methyl-D-erythritol 2,4-cyclic diphosphate + reduced [flavodoxin]. Its pathway is isoprenoid biosynthesis; isopentenyl diphosphate biosynthesis via DXP pathway; isopentenyl diphosphate from 1-deoxy-D-xylulose 5-phosphate: step 5/6. In terms of biological role, converts 2C-methyl-D-erythritol 2,4-cyclodiphosphate (ME-2,4cPP) into 1-hydroxy-2-methyl-2-(E)-butenyl 4-diphosphate. The chain is 4-hydroxy-3-methylbut-2-en-1-yl diphosphate synthase (flavodoxin) from Pseudomonas fluorescens (strain SBW25).